A 388-amino-acid chain; its full sequence is Succinate--CoA ligase [ADP-forming] subunit beta (388 aa).

Positions 9–244 (KQLFAEYGLP…PSQEDSREAH (236 aa)) constitute an ATP-grasp domain. ATP is bound by residues Lys46, 53–55 (GRG), Glu99, Thr102, and Glu107. Mg(2+)-binding residues include Asn199 and Asp213. Substrate-binding positions include Asn264 and 321–323 (GIV).

Belongs to the succinate/malate CoA ligase beta subunit family. As to quaternary structure, heterotetramer of two alpha and two beta subunits. The cofactor is Mg(2+).

It carries out the reaction succinate + ATP + CoA = succinyl-CoA + ADP + phosphate. It catalyses the reaction GTP + succinate + CoA = succinyl-CoA + GDP + phosphate. It participates in carbohydrate metabolism; tricarboxylic acid cycle; succinate from succinyl-CoA (ligase route): step 1/1. Functionally, succinyl-CoA synthetase functions in the citric acid cycle (TCA), coupling the hydrolysis of succinyl-CoA to the synthesis of either ATP or GTP and thus represents the only step of substrate-level phosphorylation in the TCA. The beta subunit provides nucleotide specificity of the enzyme and binds the substrate succinate, while the binding sites for coenzyme A and phosphate are found in the alpha subunit. This chain is Succinate--CoA ligase [ADP-forming] subunit beta, found in Pseudoalteromonas translucida (strain TAC 125).